Consider the following 340-residue polypeptide: MIDRTELSKFGITTQLSVIGRNPDEQSGFVNPPLYKGSTIILKKLSDLEQRKGRFYGTAGSPTIDNLENAWTHLTGGAGTVLSASGLGSISLALLALSKAGDHILMTDSVYVPTRMLCDGLLAKFGVETDYYDPSIGKDIEKLVKPNTTVIFLESPGSGTMEVQDIPALVSVAKKHGIKTILDNTWATPLFFDAHAHGIDISVEAGTKYLGGHSDLLIGLASANEECWPLLRSTYDAMAMLPGAEDCQLALRGMRTLHLRLKEVERKALDLAAWLGNRDEVEKVLHPAFEDCPGHEYWVRDYKGSSGLFSIVLKNGFTRAGLEKMVEGMKVLQLGFSWGG.

Lysine 208 carries the post-translational modification N6-(pyridoxal phosphate)lysine.

Belongs to the trans-sulfuration enzymes family. It depends on pyridoxal 5'-phosphate as a cofactor.

The enzyme catalyses L,L-cystathionine + H2O = L-homocysteine + pyruvate + NH4(+). It carries out the reaction an S-substituted L-cysteine + H2O = a thiol + pyruvate + NH4(+). It functions in the pathway amino-acid biosynthesis; L-methionine biosynthesis via de novo pathway; L-homocysteine from L-cystathionine: step 1/1. This chain is Putative cystathionine beta-lyase (IRC7), found in Saccharomyces cerevisiae (strain ATCC 204508 / S288c) (Baker's yeast).